The chain runs to 375 residues: Thiamine-phosphate synthase (375 aa).

Residues 1–127 (MTNAESRTVL…AACIESIRYQ (127 aa)) are unknown. Positions 128–375 (CYATFRELEL…SSDVCPLPND (248 aa)) are thiamine-phosphate synthase. Residues 183–185 (QLR) and Asn215 contribute to the 4-amino-2-methyl-5-(diphosphooxymethyl)pyrimidine site. Mg(2+) contacts are provided by Asp216 and Glu235. 4-amino-2-methyl-5-(diphosphooxymethyl)pyrimidine is bound by residues Ser254 and Lys283. 2-[(2R,5Z)-2-carboxy-4-methylthiazol-5(2H)-ylidene]ethyl phosphate is bound at residue Gly315.

Belongs to the thiamine-phosphate synthase family. It depends on Mg(2+) as a cofactor.

The catalysed reaction is 2-[(2R,5Z)-2-carboxy-4-methylthiazol-5(2H)-ylidene]ethyl phosphate + 4-amino-2-methyl-5-(diphosphooxymethyl)pyrimidine + 2 H(+) = thiamine phosphate + CO2 + diphosphate. It carries out the reaction 2-(2-carboxy-4-methylthiazol-5-yl)ethyl phosphate + 4-amino-2-methyl-5-(diphosphooxymethyl)pyrimidine + 2 H(+) = thiamine phosphate + CO2 + diphosphate. The enzyme catalyses 4-methyl-5-(2-phosphooxyethyl)-thiazole + 4-amino-2-methyl-5-(diphosphooxymethyl)pyrimidine + H(+) = thiamine phosphate + diphosphate. It participates in cofactor biosynthesis; thiamine diphosphate biosynthesis; thiamine phosphate from 4-amino-2-methyl-5-diphosphomethylpyrimidine and 4-methyl-5-(2-phosphoethyl)-thiazole: step 1/1. Functionally, condenses 4-methyl-5-(beta-hydroxyethyl)thiazole monophosphate (THZ-P) and 2-methyl-4-amino-5-hydroxymethyl pyrimidine pyrophosphate (HMP-PP) to form thiamine monophosphate (TMP). The protein is Thiamine-phosphate synthase (thiE) of Rhodopirellula baltica (strain DSM 10527 / NCIMB 13988 / SH1).